The following is a 261-amino-acid chain: Hemin import ATP-binding protein HmuV (261 aa).

The ABC transporter domain maps to tyrosine 5–glutamine 241. Glycine 37 to serine 44 contacts ATP.

It belongs to the ABC transporter superfamily. Heme (hemin) importer (TC 3.A.1.14.5) family. In terms of assembly, the complex is composed of two ATP-binding proteins (HmuV), two transmembrane proteins (HmuU) and a solute-binding protein (HmuT).

Its subcellular location is the cell inner membrane. In terms of biological role, part of the ABC transporter complex HmuTUV involved in hemin import. Responsible for energy coupling to the transport system. In Enterobacter cloacae, this protein is Hemin import ATP-binding protein HmuV.